The primary structure comprises 108 residues: Replication restart protein PriB (108 aa).

An SSB domain is found at 8-108 (IDNRFSVMGV…LHAEQIEFID (101 aa)).

It belongs to the PriB family. In terms of assembly, homodimer. Interacts with PriA and DnaT. Component of the replication restart primosome. Primosome assembly occurs via a 'hand-off' mechanism. PriA binds to replication forks, subsequently PriB then DnaT bind; DnaT then displaces ssDNA to generate the helicase loading substrate.

Its function is as follows. Involved in the restart of stalled replication forks, which reloads the replicative helicase on sites other than the origin of replication; the PriA-PriB pathway is the major replication restart pathway. During primosome assembly it facilitates complex formation between PriA and DnaT on DNA; stabilizes PriA on DNA. Stimulates the DNA unwinding activity of PriA helicase. In Haemophilus influenzae (strain 86-028NP), this protein is Replication restart protein PriB.